Reading from the N-terminus, the 284-residue chain is BTB/POZ domain-containing protein 2 (284 aa).

Positions 37–108 constitute a BTB domain; that stretch reads SDTTLIIKGE…LYCDSPRIPA (72 aa).

Interacts with cul3.

It localises to the cytoplasm. Its subcellular location is the nucleus. It participates in protein modification; protein ubiquitination. Probable substrate-specific adapter of an E3 ubiquitin-protein ligase complex which mediates the ubiquitination and subsequent proteasomal degradation of target proteins. The polypeptide is BTB/POZ domain-containing protein 2 (btb2) (Schizosaccharomyces pombe (strain 972 / ATCC 24843) (Fission yeast)).